The following is a 134-amino-acid chain: MAKEGTTVIGVPYYAGQNPYQAGIVPPNAIYGDPLGAPIQQTIYRDTPAPFNCLYCGNTGLTNLRSKPGVAAVVACMMPFMLGFCFLCPSMDCLWNKQHHCPQCGNKVADFEKSDPCLVMDPPQWKQPSFALPA.

The LITAF domain maps to 33–113 (DPLGAPIQQT…CGNKVADFEK (81 aa)). Zn(2+) is bound by residues Cys-53 and Cys-56. A membrane-binding amphipathic helix region spans residues 68–88 (PGVAAVVACMMPFMLGFCFLC). Zn(2+) contacts are provided by Cys-101 and Cys-104.

This sequence belongs to the CDIP1/LITAF family. In terms of assembly, interacts (via N- and C-terminal) with MIEL1 and LSD1 (via N-terminus).

It is found in the cell membrane. In terms of biological role, acts as a membrane anchor, bringing other regulators of programmed cell death (PCD) to the plasma membrane. Negatively regulates hypersensitive cell death. This is GSH-induced LITAF domain protein from Arabidopsis thaliana (Mouse-ear cress).